A 268-amino-acid polypeptide reads, in one-letter code: Tryptophan synthase alpha chain (268 aa).

Residues glutamate 49 and aspartate 60 each act as proton acceptor in the active site.

It belongs to the TrpA family. In terms of assembly, tetramer of two alpha and two beta chains.

The enzyme catalyses (1S,2R)-1-C-(indol-3-yl)glycerol 3-phosphate + L-serine = D-glyceraldehyde 3-phosphate + L-tryptophan + H2O. Its pathway is amino-acid biosynthesis; L-tryptophan biosynthesis; L-tryptophan from chorismate: step 5/5. Functionally, the alpha subunit is responsible for the aldol cleavage of indoleglycerol phosphate to indole and glyceraldehyde 3-phosphate. The protein is Tryptophan synthase alpha chain of Serratia proteamaculans (strain 568).